We begin with the raw amino-acid sequence, 461 residues long: Kynureninase (461 aa).

Pyridoxal 5'-phosphate contacts are provided by residues Leu-114, Thr-115, 142-145 (FPSD), Asp-228, His-231, and Tyr-253. At Lys-254 the chain carries N6-(pyridoxal phosphate)lysine. The pyridoxal 5'-phosphate site is built by Trp-288 and Asn-316.

It belongs to the kynureninase family. As to quaternary structure, homodimer. Pyridoxal 5'-phosphate is required as a cofactor.

Its subcellular location is the cytoplasm. It catalyses the reaction L-kynurenine + H2O = anthranilate + L-alanine + H(+). The catalysed reaction is 3-hydroxy-L-kynurenine + H2O = 3-hydroxyanthranilate + L-alanine + H(+). Its pathway is amino-acid degradation; L-kynurenine degradation; L-alanine and anthranilate from L-kynurenine: step 1/1. The protein operates within cofactor biosynthesis; NAD(+) biosynthesis; quinolinate from L-kynurenine: step 2/3. In terms of biological role, catalyzes the cleavage of L-kynurenine (L-Kyn) and L-3-hydroxykynurenine (L-3OHKyn) into anthranilic acid (AA) and 3-hydroxyanthranilic acid (3-OHAA), respectively. The polypeptide is Kynureninase (Candida albicans (strain SC5314 / ATCC MYA-2876) (Yeast)).